We begin with the raw amino-acid sequence, 464 residues long: ATP synthase subunit beta (464 aa).

153 to 160 (GGAGVGKT) contacts ATP.

The protein belongs to the ATPase alpha/beta chains family. As to quaternary structure, F-type ATPases have 2 components, CF(1) - the catalytic core - and CF(0) - the membrane proton channel. CF(1) has five subunits: alpha(3), beta(3), gamma(1), delta(1), epsilon(1). CF(0) has three main subunits: a(1), b(2) and c(9-12). The alpha and beta chains form an alternating ring which encloses part of the gamma chain. CF(1) is attached to CF(0) by a central stalk formed by the gamma and epsilon chains, while a peripheral stalk is formed by the delta and b chains.

The protein localises to the cell membrane. It carries out the reaction ATP + H2O + 4 H(+)(in) = ADP + phosphate + 5 H(+)(out). Produces ATP from ADP in the presence of a proton gradient across the membrane. The catalytic sites are hosted primarily by the beta subunits. The protein is ATP synthase subunit beta of Alkaliphilus metalliredigens (strain QYMF).